A 332-amino-acid polypeptide reads, in one-letter code: Protein pelota homolog (332 aa).

The protein belongs to the eukaryotic release factor 1 family. Pelota subfamily. Monomer. The cofactor is a divalent metal cation.

It is found in the cytoplasm. In terms of biological role, may function in recognizing stalled ribosomes, interact with stem-loop structures in stalled mRNA molecules, and effect endonucleolytic cleavage of the mRNA. May play a role in the release non-functional ribosomes and degradation of damaged mRNAs. Has endoribonuclease activity. This chain is Protein pelota homolog, found in Pyrobaculum calidifontis (strain DSM 21063 / JCM 11548 / VA1).